The following is a 498-amino-acid chain: MSKNEIRVRYAPSPTGHLHIGNARTALFNYLFARHNHGKFIIRIEDTDTKRNIADGERSQLDNLKWMGLDWDEGPDKGGDFGPYRQSERKDIYAQYIQELMDKGLAYKSYMTEEELEAQREAQKAAHQMPHYEYEYAGMSDDQIKAAQEAAEEKGLKPVIRFRVPKDEVFEWEDLVKGPMSFEAQSIGGDFVIQKRDGMPTYNFAVVIDDHLMKISHVFRGDDHVSNTPKQMAIYQALGWKVPEFGHMSLIINNETGKKLSKRDESVLQFIEQYRDLGYLPEAMDNFIILLGWSPVGEDEIFSLKEFVKMYDEKRLSKSPAAFDRKKLQWINNQYMKLSSADEVFHVAMPQLLDAGLIEKNANPYKMEWMRRLVELFKREISYAREIVDYVKPFVNGPEDISEEAKAEMQEDTALVVIKAFRDRVAAMDFMDATGVLAAIKDVQKSTKVKGRKLWMPLRIAVTHETHGPELPESIELFGQEKTLAHLDEMIAQLEENK.

Residues 12 to 22 carry the 'HIGH' region motif; the sequence is PSPTGHLHIGN. The 'KMSKS' region motif lies at 259-263; sequence KLSKR. Residue K262 participates in ATP binding.

The protein belongs to the class-I aminoacyl-tRNA synthetase family. Glutamate--tRNA ligase type 1 subfamily. As to quaternary structure, monomer.

It is found in the cytoplasm. The catalysed reaction is tRNA(Glu) + L-glutamate + ATP = L-glutamyl-tRNA(Glu) + AMP + diphosphate. Catalyzes the attachment of glutamate to tRNA(Glu) in a two-step reaction: glutamate is first activated by ATP to form Glu-AMP and then transferred to the acceptor end of tRNA(Glu). The protein is Glutamate--tRNA ligase of Limosilactobacillus fermentum (strain NBRC 3956 / LMG 18251) (Lactobacillus fermentum).